The primary structure comprises 170 residues: Putative 4-hydroxy-4-methyl-2-oxoglutarate aldolase (170 aa).

Substrate is bound by residues 81–84 and Arg103; that span reads GDII. Asp104 lines the a divalent metal cation pocket.

This sequence belongs to the class II aldolase/RraA-like family. In terms of assembly, homotrimer. A divalent metal cation serves as cofactor.

It carries out the reaction 4-hydroxy-4-methyl-2-oxoglutarate = 2 pyruvate. The enzyme catalyses oxaloacetate + H(+) = pyruvate + CO2. Functionally, catalyzes the aldol cleavage of 4-hydroxy-4-methyl-2-oxoglutarate (HMG) into 2 molecules of pyruvate. Also contains a secondary oxaloacetate (OAA) decarboxylase activity due to the common pyruvate enolate transition state formed following C-C bond cleavage in the retro-aldol and decarboxylation reactions. The protein is Putative 4-hydroxy-4-methyl-2-oxoglutarate aldolase of Corynebacterium efficiens (strain DSM 44549 / YS-314 / AJ 12310 / JCM 11189 / NBRC 100395).